Reading from the N-terminus, the 394-residue chain is MSQIQTRTEPMVINMGPHHPSMHGVLRLIVTLDGEDVIDCEPVIGYLHRGMEKIAENRTNTMFVPYVSRWDYAAGMFNEAVTVNAPEQLADIAVPKRASYIRVIMLELNRIANHLLWLGPFLADVGAQTPFFYIFREREMIYDLWEAATGYRMVNNNYFRIGGVAADLPYGWVDKCEDFCDYFLPKVDEYERLITNNPIFRRRIMGLGVISREEAINWGLSGPMLRASGVKWDLRKVDHYECYDDFDWEVHWEKDGDCLARYLVRIREMRESVNIIRQAIKGLPGGPYENLEAKRMAEGPKSEWNDFDYQFLGKKIPPTFKIPKGEHYVRIESGKGEIGIYIIGDNNIFPWRFKIRAADFVNLQIFPHILQGAKVADLVAILGSIDIIMGSVDR.

The protein belongs to the complex I 49 kDa subunit family. As to quaternary structure, NDH-1 can be composed of about 15 different subunits; different subcomplexes with different compositions have been identified which probably have different functions.

It is found in the cellular thylakoid membrane. It carries out the reaction a plastoquinone + NADH + (n+1) H(+)(in) = a plastoquinol + NAD(+) + n H(+)(out). It catalyses the reaction a plastoquinone + NADPH + (n+1) H(+)(in) = a plastoquinol + NADP(+) + n H(+)(out). Functionally, NDH-1 shuttles electrons from an unknown electron donor, via FMN and iron-sulfur (Fe-S) centers, to quinones in the respiratory and/or the photosynthetic chain. The immediate electron acceptor for the enzyme in this species is believed to be plastoquinone. Couples the redox reaction to proton translocation, and thus conserves the redox energy in a proton gradient. Cyanobacterial NDH-1 also plays a role in inorganic carbon-concentration. In Trichodesmium erythraeum (strain IMS101), this protein is NAD(P)H-quinone oxidoreductase subunit H.